Consider the following 301-residue polypeptide: LHMIHLHWYQYPPMNPIMYPLLLVFMLITGILCLAGNFVTIWVFMNTKSLRTPANLLVVNLAMSDFLMMFTMFPPMMITCYYHTWTLGATFCQVYAFLGNLCGCASIWTMVFITFDRYNVIVKGVAGEPLSTKKATLWILTIWILSTTWCVAPFFGWNRYVPEGNLTGCGTDYLSQDILSRSYLYIYSTWVYFLPLAITIYCYVVIIKAVAAHEKGMRDQAKKMGIKSLRNEEAQKTSAECRLAKIAMTTVALWFIAWTPYLLINWVGMFARSYLSPVYTIWGYVFAKANAVYNPIVYAIS.

The Extracellular portion of the chain corresponds to 1–18 (LHMIHLHWYQYPPMNPIM). A helical transmembrane segment spans residues 19 to 43 (YPLLLVFMLITGILCLAGNFVTIWV). The Cytoplasmic portion of the chain corresponds to 44–55 (FMNTKSLRTPAN). The chain crosses the membrane as a helical span at residues 56–78 (LLVVNLAMSDFLMMFTMFPPMMI). At 79-92 (TCYYHTWTLGATFC) the chain is on the extracellular side. C92 and C169 are joined by a disulfide. A helical membrane pass occupies residues 93–115 (QVYAFLGNLCGCASIWTMVFITF). Residues 116 to 118 (DRY) carry the 'Ionic lock' involved in activated form stabilization motif. Topologically, residues 116 to 134 (DRYNVIVKGVAGEPLSTKK) are cytoplasmic. The helical transmembrane segment at 135–155 (ATLWILTIWILSTTWCVAPFF) threads the bilayer. At 156-182 (GWNRYVPEGNLTGCGTDYLSQDILSRS) the chain is on the extracellular side. N165 carries N-linked (GlcNAc...) asparagine glycosylation. A helical transmembrane segment spans residues 183–204 (YLYIYSTWVYFLPLAITIYCYV). At 205-245 (VIIKAVAAHEKGMRDQAKKMGIKSLRNEEAQKTSAECRLAK) the chain is on the cytoplasmic side. Residues 246–267 (IAMTTVALWFIAWTPYLLINWV) traverse the membrane as a helical segment. At 268–278 (GMFARSYLSPV) the chain is on the extracellular side. A helical transmembrane segment spans residues 279–300 (YTIWGYVFAKANAVYNPIVYAI). An N6-(retinylidene)lysine modification is found at K288.

This sequence belongs to the G-protein coupled receptor 1 family. Opsin subfamily. As to quaternary structure, homodimer. Interacts with GNAQ. Contains one covalently linked retinal chromophore.

It is found in the cell projection. Its subcellular location is the rhabdomere membrane. Functionally, photoreceptor required for image-forming vision at low light intensity. Can use both retinal and 3-dehydroretinal as visual pigment. Light-induced isomerization of 11-cis to all-trans retinal triggers a conformational change that activates signaling via G-proteins. Signaling via GNAQ probably mediates the activation of phospholipase C. The polypeptide is Rhodopsin (RHO) (Orconectes australis (Southern cave crayfish)).